We begin with the raw amino-acid sequence, 473 residues long: Phosphatidylserine synthase 1 (473 aa).

At alanine 2 the chain carries N-acetylalanine. At 2 to 35 (ASCVGSRTLSKDDVNYKMHFRMINEQQVEDITID) the chain is on the cytoplasmic side. Residues 36 to 56 (FFYRPHTITLLSFTIVSLMYF) traverse the membrane as a helical segment. Residues 57-72 (AFTRDDSVPEDNIWRG) lie on the Lumenal side of the membrane. Residues 73 to 93 (ILSVIFFFLIISVLAFPNGPF) form a helical membrane-spanning segment. Residues 94 to 102 (TRPHPALWR) lie on the Cytoplasmic side of the membrane. The chain crosses the membrane as a helical span at residues 103–123 (MVFGLSVLYFLFLVFLLFLNF). At 124–186 (EQVKSLMYWL…AMKALLIRSY (63 aa)) the chain is on the lumenal side. The helical transmembrane segment at 187 to 207 (GLCWTISITWELTELFFMHLL) threads the bilayer. At 208-216 (PNFAECWWD) the chain is on the cytoplasmic side. Residues 217-237 (QVILDILLCNGGGIWLGMVVC) traverse the membrane as a helical segment. The Lumenal portion of the chain corresponds to 238–286 (RFLEMRTYHWASFKDIHTTTGKIKRAVLQFTPASWTYVRWFDPKSSFQR). A helical transmembrane segment spans residues 287 to 307 (VAGIYLFMIIWQLTELNTFFL). The Cytoplasmic segment spans residues 308 to 319 (KHIFVFQASHPL). Residues 320–342 (SWCRILFIGGITAPTVRQYYAYL) form a helical membrane-spanning segment. Topologically, residues 343-355 (TDTQCKRVGTQCW) are lumenal. A helical membrane pass occupies residues 356–376 (VFGVIGFLEAIVCIKFGQDLF). Topologically, residues 377-383 (SKTQILY) are cytoplasmic. The helical transmembrane segment at 384 to 404 (VVLWLLCVAFTTFLCLYGMVW) threads the bilayer. At 405-473 (YAEHYGHREK…SKVTNGVGKK (69 aa)) the chain is on the lumenal side. Serine 417, serine 425, and serine 454 each carry phosphoserine. Positions 427-473 (DISWPHGKGSKGSEDGPHKHPGNSESHSSRRRNRHSKSKVTNGVGKK) are disordered. Residues 455–464 (SRRRNRHSKS) are compositionally biased toward basic residues.

This sequence belongs to the phosphatidyl serine synthase family.

The protein resides in the endoplasmic reticulum membrane. The catalysed reaction is a 1,2-diacyl-sn-glycero-3-phosphoethanolamine + L-serine = a 1,2-diacyl-sn-glycero-3-phospho-L-serine + ethanolamine. It carries out the reaction a 1,2-diacyl-sn-glycero-3-phosphocholine + L-serine = a 1,2-diacyl-sn-glycero-3-phospho-L-serine + choline. Its pathway is phospholipid metabolism; phosphatidylserine biosynthesis. Its function is as follows. Catalyzes a base-exchange reaction in which the polar head group of phosphatidylethanolamine (PE) or phosphatidylcholine (PC) is replaced by L-serine. Catalyzes mainly the conversion of phosphatidylcholine but also converts, in vitro and to a lesser extent, phosphatidylethanolamine. The chain is Phosphatidylserine synthase 1 (PTDSS1) from Bos taurus (Bovine).